The following is a 115-amino-acid chain: MSESNQATFQGNDPAAHAPDAAAYDKGKGKAVEDMDVSMDEEEEESEESDAEIMVEDEDDDGDSNLEPVSTENIISGGRRTRGKTIDYQEAANKIDADEMDDEEDDDEDFKPSDK.

Positions 1 to 11 (MSESNQATFQG) are enriched in polar residues. The interval 1–115 (MSESNQATFQ…DDEDFKPSDK (115 aa)) is disordered. Low complexity predominate over residues 13–22 (DPAAHAPDAA). The span at 23 to 33 (AYDKGKGKAVE) shows a compositional bias: basic and acidic residues. 2 stretches are compositionally biased toward acidic residues: residues 34-64 (DMDV…DGDS) and 98-109 (DEMDDEEDDDED).

This sequence belongs to the CHZ1 family. In terms of assembly, forms a heterotrimer with H2A.Z-H2B, stabilizing the association of the histone dimer. Also, with a lower affinity, forms a heterotrimer with H2A-H2B.

The protein localises to the nucleus. Functionally, forms a chaperone-bound H2A.Z-H2B complex that acts as a source for SWR1 complex-dependent H2A to H2A.Z histone replacement in chromatin. The polypeptide is Histone H2A.Z-specific chaperone chz1 (chz1) (Emericella nidulans (strain FGSC A4 / ATCC 38163 / CBS 112.46 / NRRL 194 / M139) (Aspergillus nidulans)).